Consider the following 254-residue polypeptide: Alcohol dehydrogenase (254 aa).

10 to 33 contacts NAD(+); that stretch reads FVAGLGGIGLDTSRELVKRNLKNL. Ser138 contributes to the substrate binding site. Tyr151 serves as the catalytic Proton acceptor.

The protein belongs to the short-chain dehydrogenases/reductases (SDR) family. As to quaternary structure, homodimer.

The catalysed reaction is a primary alcohol + NAD(+) = an aldehyde + NADH + H(+). It carries out the reaction a secondary alcohol + NAD(+) = a ketone + NADH + H(+). The chain is Alcohol dehydrogenase (Adh) from Drosophila pseudoobscura pseudoobscura (Fruit fly).